A 167-amino-acid chain; its full sequence is Adenylylsulfate reductase subunit beta (167 aa).

4Fe-4S ferredoxin-type domains lie at 1-35 (MPTF…LDPE) and 38-67 (KAFN…ARPY). The [4Fe-4S] cluster site is built by Cys10, Cys13, Cys21, Cys25, Cys47, Cys50, Cys53, and Cys57.

Heterodimer composed of AprA and AprB. The heterodimers can dimerize to form heterotetramers. The cofactor is [4Fe-4S] cluster.

The protein localises to the cytoplasm. Its function is as follows. Iron-sulfur cluster subunit of the adenylylsulfate reductase which catalyzes reversibly the reduction of adenosine 5'-phosphosulfate (APS) to sulfite and AMP during dissimilatory sulfate reduction. The iron-sulfur cluster 2 is thought to accept electrons from a still unknown electron donor and transfer electrons to the iron-sulfur cluster 1 of this protein and then onto the FAD of AprA. In Megalodesulfovibrio gigas (strain ATCC 19364 / DSM 1382 / NCIMB 9332 / VKM B-1759) (Desulfovibrio gigas), this protein is Adenylylsulfate reductase subunit beta.